Reading from the N-terminus, the 238-residue chain is Trypsin-3 (238 aa).

The N-terminal stretch at 1-7 (FAVAFAA) is a signal peptide. Positions 8 to 15 (PIDDEDDK) are cleaved as a propeptide — activation peptide. One can recognise a Peptidase S1 domain in the interval 16–236 (IVGGYECRKN…YRSWISSTMS (221 aa)). 6 disulfides stabilise this stretch: Cys-22-Cys-152, Cys-40-Cys-56, Cys-124-Cys-225, Cys-131-Cys-198, Cys-163-Cys-177, and Cys-188-Cys-212. His-55 functions as the Charge relay system in the catalytic mechanism. 4 residues coordinate Ca(2+): Glu-67, Asn-69, Val-72, and Glu-77. The active-site Charge relay system is the Asp-99. The active-site Charge relay system is the Ser-192.

The protein belongs to the peptidase S1 family. It depends on Ca(2+) as a cofactor.

Its subcellular location is the secreted. It is found in the extracellular space. The catalysed reaction is Preferential cleavage: Arg-|-Xaa, Lys-|-Xaa.. The polypeptide is Trypsin-3 (Salmo salar (Atlantic salmon)).